Consider the following 144-residue polypeptide: Superoxide dismutase [Mn] (144 aa).

The interval 1–22 (GYVNGLESAEETLAENRESGDF) is disordered. The Mn(2+) site is built by His42, Asp124, and His128.

This sequence belongs to the iron/manganese superoxide dismutase family. It depends on Mn(2+) as a cofactor.

It carries out the reaction 2 superoxide + 2 H(+) = H2O2 + O2. In terms of biological role, destroys superoxide anion radicals which are normally produced within the cells and which are toxic to biological systems. The sequence is that of Superoxide dismutase [Mn] (sod) from Haloarcula hispanica.